Here is a 134-residue protein sequence, read N- to C-terminus: MGRDTIAEVLTVIRNANMDGKKMVKIPSSNITENIIKLLLREGFLENVRKHYENGNYFLVLTLRHQKTKKGPVTNILNLKQISRPGRRIYSMSKKIPRILGGIGIVILSTSHGILTDREARLEGIGGEILCYIW.

This sequence belongs to the universal ribosomal protein uS8 family. Part of the 30S ribosomal subunit.

It is found in the plastid. Its function is as follows. One of the primary rRNA binding proteins, it binds directly to 16S rRNA central domain where it helps coordinate assembly of the platform of the 30S subunit. This Cuscuta gronovii (Common dodder) protein is Small ribosomal subunit protein uS8c (rps8).